The sequence spans 331 residues: Holliday junction branch migration complex subunit RuvB (331 aa).

Residues 1-178 (MRNSIFEQEE…FGITLRLDFY (178 aa)) are large ATPase domain (RuvB-L). ATP contacts are provided by residues Leu17, Arg18, Gly59, Lys62, Thr63, Thr64, 125–127 (EDY), Arg168, Tyr178, and Arg215. Thr63 is a Mg(2+) binding site. The interval 179–249 (TVSELLQLLQ…FADLALNKME (71 aa)) is small ATPAse domain (RuvB-S). The segment at 252-331 (QFGLDKLDYT…LSTINSARLP (80 aa)) is head domain (RuvB-H). Residues Arg307 and Arg312 each contribute to the DNA site.

This sequence belongs to the RuvB family. As to quaternary structure, homohexamer. Forms an RuvA(8)-RuvB(12)-Holliday junction (HJ) complex. HJ DNA is sandwiched between 2 RuvA tetramers; dsDNA enters through RuvA and exits via RuvB. An RuvB hexamer assembles on each DNA strand where it exits the tetramer. Each RuvB hexamer is contacted by two RuvA subunits (via domain III) on 2 adjacent RuvB subunits; this complex drives branch migration. In the full resolvosome a probable DNA-RuvA(4)-RuvB(12)-RuvC(2) complex forms which resolves the HJ.

It localises to the cytoplasm. It catalyses the reaction ATP + H2O = ADP + phosphate + H(+). Its function is as follows. The RuvA-RuvB-RuvC complex processes Holliday junction (HJ) DNA during genetic recombination and DNA repair, while the RuvA-RuvB complex plays an important role in the rescue of blocked DNA replication forks via replication fork reversal (RFR). RuvA specifically binds to HJ cruciform DNA, conferring on it an open structure. The RuvB hexamer acts as an ATP-dependent pump, pulling dsDNA into and through the RuvAB complex. RuvB forms 2 homohexamers on either side of HJ DNA bound by 1 or 2 RuvA tetramers; 4 subunits per hexamer contact DNA at a time. Coordinated motions by a converter formed by DNA-disengaged RuvB subunits stimulates ATP hydrolysis and nucleotide exchange. Immobilization of the converter enables RuvB to convert the ATP-contained energy into a lever motion, pulling 2 nucleotides of DNA out of the RuvA tetramer per ATP hydrolyzed, thus driving DNA branch migration. The RuvB motors rotate together with the DNA substrate, which together with the progressing nucleotide cycle form the mechanistic basis for DNA recombination by continuous HJ branch migration. Branch migration allows RuvC to scan DNA until it finds its consensus sequence, where it cleaves and resolves cruciform DNA. The protein is Holliday junction branch migration complex subunit RuvB of Neorickettsia sennetsu (strain ATCC VR-367 / Miyayama) (Ehrlichia sennetsu).